We begin with the raw amino-acid sequence, 529 residues long: UDP-glucuronosyltransferase 2B33 (529 aa).

Residues 1 to 24 (MSVKWTSIILLIQLSFYFSSGSCG) form the signal peptide. 2 N-linked (GlcNAc...) asparagine glycosylation sites follow: N67 and N68. A helical membrane pass occupies residues 494–514 (IGFLLACVATVIFIIMKCCLF).

It belongs to the UDP-glycosyltransferase family.

It localises to the microsome membrane. The protein resides in the endoplasmic reticulum membrane. It catalyses the reaction glucuronate acceptor + UDP-alpha-D-glucuronate = acceptor beta-D-glucuronoside + UDP + H(+). Its function is as follows. UDPGTs are of major importance in the conjugation and subsequent elimination of potentially toxic xenobiotics and endogenous compounds. This isozyme has glucuronidating capacity on estriol and does not catalyze the glucuronidation of beta-estradiol. Capable of conjugating 4-hydroxyestrone, androsterone, diclofenac, and hyodeoxycholic acid. This Macaca mulatta (Rhesus macaque) protein is UDP-glucuronosyltransferase 2B33 (UGT2B33).